The chain runs to 950 residues: Translation initiation factor IF-2 (950 aa).

Basic and acidic residues-rich tracts occupy residues 128–158 (KPKV…EAKA), 165–186 (AEVK…EKKK), 200–234 (KRAE…DNRR), and 291–312 (NRRD…DGNR). Positions 128–354 (KPKVAEPVKK…NNQSSSVPAT (227 aa)) are disordered. 2 stretches are compositionally biased toward polar residues: residues 322-336 (NRNQ…NWNQ) and 343-353 (YQNNQSSSVPA). The tr-type G domain occupies 448-619 (ERPAVVTIMG…LLVAEVQELK (172 aa)). Residues 457–464 (GHVDHGKT) form a G1 region. A GTP-binding site is contributed by 457–464 (GHVDHGKT). The G2 stretch occupies residues 482 to 486 (GITQH). Positions 503–506 (DTPG) are G3. Residues 503–507 (DTPGH) and 557–560 (NKID) each bind GTP. Residues 557 to 560 (NKID) are G4. The segment at 595–597 (SAK) is G5.

It belongs to the TRAFAC class translation factor GTPase superfamily. Classic translation factor GTPase family. IF-2 subfamily.

It is found in the cytoplasm. Functionally, one of the essential components for the initiation of protein synthesis. Protects formylmethionyl-tRNA from spontaneous hydrolysis and promotes its binding to the 30S ribosomal subunits. Also involved in the hydrolysis of GTP during the formation of the 70S ribosomal complex. This Lactococcus lactis subsp. cremoris (strain MG1363) protein is Translation initiation factor IF-2.